We begin with the raw amino-acid sequence, 564 residues long: MEGDQRSGPPAQSLLPDGHLVLWTLCSVLLPVFITLWCSLQRSRRQLHRRDIFRKSKHCWRDTDLFSHPTYCCVCAQHILQGAFCDCCGLRVDEGCLKKVDKRFPCKEIMLKNDKAADAMPHHWIRGNVPLCSYCVFCRQQCGSQPKLCDYRCIWCQKTVHDECMRGSLRSEKCDFGEFRNLIIPPSYLTSINQMRKDKNTNYEGLASKFGKQWTPLIILANSRSGTNMGEGLLGEFKILLNPVQVFDVTKTPPIKALQLCTLLPYYSVRVLVCGGDGTVGWVLDAIDEMKIKGQEKYIPEVAVLPLGTGNDLSNTLGWGTGYAGEIPVAQVLRNVMEADGIKLDRWKVQVTNKGYYNLRKPKEFTMNNYFSVGPDALMALNFHAHREKAPSLFSSRILNKAVYLFYGTKDCLVQECKDLNKKIELELDGERVELPNLEGIIVLNIGYWGGGCRLWEGMGDETYPLARHDDGLLEIVGVYGSFHCAQIQVKLANPFRIGQAHTVRLTLKCSMMPMQVDGEPWAQGPCTVTITHKTHALMLYFSGEQSDDDISSPSDHEDVKEAE.

A helical membrane pass occupies residues 20–40 (LVLWTLCSVLLPVFITLWCSL). 2 Phorbol-ester/DAG-type zinc fingers span residues 57-106 (KHCW…RFPC) and 121-174 (PHHW…SEKC). Positions 212-353 (KQWTPLIILA…LDRWKVQVTN (142 aa)) constitute a DAGKc domain.

The protein belongs to the eukaryotic diacylglycerol kinase family. In terms of tissue distribution, highly expressed in brain and heart. In brain, highly expressed in Purkinje cells of the cerebellum, pyramidal cells of the hippocampus, mitral cells of the olfactory bulb, and neurons of the substantia nigra. Lower expression in neurons of the thalamus, superior olive, and lateral reticular nucleus is also detected. Expressed in platelets.

It localises to the membrane. The protein localises to the cytoplasm. It catalyses the reaction a 1,2-diacyl-sn-glycerol + ATP = a 1,2-diacyl-sn-glycero-3-phosphate + ADP + H(+). It carries out the reaction 1-hexadecanoyl-2-(5Z,8Z,11Z,14Z-eicosatetraenoyl)-sn-glycerol + ATP = 1-hexadecanoyl-2-(5Z,8Z,11Z,14Z-eicosatetraenoyl)-sn-glycero-3-phosphate + ADP + H(+). The catalysed reaction is 1-octadecanoyl-2-(5Z,8Z,11Z,14Z-eicosatetraenoyl)-sn-glycerol + ATP = 1-octadecanoyl-2-(5Z,8Z,11Z,14Z-eicosatetraenoyl)-sn-glycero-3-phosphate + ADP + H(+). The enzyme catalyses 1-eicosanoyl-2-(5Z,8Z,11Z,14Z)-eicosatetraenoyl-sn-glycerol + ATP = 1-eicosanoyl-2-(5Z,8Z,11Z,14Z)-eicosatetraenoyl-sn-glycero-3-phosphate + ADP + H(+). It catalyses the reaction 1,2-di-(5Z,8Z,11Z,14Z)-eicosatetraenoyl-sn-glycerol + ATP = 1,2-di-(5Z,8Z,11Z,14Z)-eicosatetraenoyl-sn-glycero-3-phosphate + ADP + H(+). It carries out the reaction 1-octadecanoyl-2-(9Z,12Z)-octadecadienoyl-sn-glycerol + ATP = 1-octadecanoyl-2-(9Z,12Z-octadecadienoyl)-sn-glycero-3-phosphate + ADP + H(+). The catalysed reaction is 1,2-di-(9Z,12Z-octadecadienoyl)-sn-glycerol + ATP = 1,2-di-(9Z,12Z-octadecadienoyl)-sn-glycero-3-phosphate + ADP + H(+). The enzyme catalyses 1,2-di-(9Z-octadecenoyl)-sn-glycerol + ATP = 1,2-di-(9Z-octadecenoyl)-sn-glycero-3-phosphate + ADP + H(+). It participates in lipid metabolism; glycerolipid metabolism. Functionally, membrane-bound diacylglycerol kinase that converts diacylglycerol/DAG into phosphatidic acid/phosphatidate/PA and regulates the respective levels of these two bioactive lipids. Thereby, acts as a central switch between the signaling pathways activated by these second messengers with different cellular targets and opposite effects in numerous biological processes. Also plays an important role in the biosynthesis of complex lipids. Displays specificity for diacylglycerol substrates with an arachidonoyl acyl chain at the sn-2 position, with the highest activity toward 1-octadecanoyl-2-(5Z,8Z,11Z,14Z-eicosatetraenoyl)-sn-glycerol the main diacylglycerol intermediate within the phosphatidylinositol turnover cycle. Can also phosphorylate diacylglycerol substrates with a linoleoyl acyl chain at the sn-2 position but much less efficiently. The chain is Diacylglycerol kinase epsilon (Dgke) from Mus musculus (Mouse).